Here is a 1872-residue protein sequence, read N- to C-terminus: E3 ubiquitin-protein ligase UBR2 (1872 aa).

The UBR-type zinc-finger motif lies at 96-172 (TACTRLCFPS…DAFKCKNELN (77 aa)). A Glycyl lysine isopeptide (Lys-Gly) (interchain with G-Cter in ubiquitin) cross-link involves residue Lys709. An interaction with UBC2 region spans residues 1134-1240 (RYLMETAPHV…SSNTINSCCD (107 aa)). The tract at residues 1203 to 1227 (NNSVDTSDISTPRTTSPSLSPTRIN) is disordered. The segment covering 1212–1225 (STPRTTSPSLSPTR) has biased composition (low complexity). Phosphoserine occurs at positions 1218 and 1222. Residues 1241-1362 (DDCVFCKMPK…GLIYCPVCNS (122 aa)) form an RING-type; atypical zinc finger.

This sequence belongs to the E3 ubiquitin-protein ligase UBR1-like family. Interacts with MUB1, RPN4 and UBC2.

The protein localises to the cytoplasm. It carries out the reaction S-ubiquitinyl-[E2 ubiquitin-conjugating enzyme]-L-cysteine + [acceptor protein]-L-lysine = [E2 ubiquitin-conjugating enzyme]-L-cysteine + N(6)-ubiquitinyl-[acceptor protein]-L-lysine.. It participates in protein modification; protein ubiquitination. Functionally, E3 ubiquitin-protein ligase which probably functions outside the N-end rule pathway, since it lacks the residues essential for the degradation of N-end rule substrates. Mediates RPN4 ubiquitination and subsequent degradation. The polypeptide is E3 ubiquitin-protein ligase UBR2 (UBR2) (Saccharomyces cerevisiae (strain ATCC 204508 / S288c) (Baker's yeast)).